Here is an 86-residue protein sequence, read N- to C-terminus: UPF0335 protein BR1752/BS1330_I1746 (86 aa).

Belongs to the UPF0335 family.

This is UPF0335 protein BR1752/BS1330_I1746 from Brucella suis biovar 1 (strain 1330).